Reading from the N-terminus, the 150-residue chain is Large ribosomal subunit protein bL9 (150 aa).

The protein belongs to the bacterial ribosomal protein bL9 family.

Binds to the 23S rRNA. This is Large ribosomal subunit protein bL9 from Burkholderia thailandensis (strain ATCC 700388 / DSM 13276 / CCUG 48851 / CIP 106301 / E264).